A 455-amino-acid polypeptide reads, in one-letter code: Probable glycine dehydrogenase (decarboxylating) subunit 1 (455 aa).

It belongs to the GcvP family. N-terminal subunit subfamily. The glycine cleavage system is composed of four proteins: P, T, L and H. In this organism, the P 'protein' is a heterodimer of two subunits.

The enzyme catalyses N(6)-[(R)-lipoyl]-L-lysyl-[glycine-cleavage complex H protein] + glycine + H(+) = N(6)-[(R)-S(8)-aminomethyldihydrolipoyl]-L-lysyl-[glycine-cleavage complex H protein] + CO2. Functionally, the glycine cleavage system catalyzes the degradation of glycine. The P protein binds the alpha-amino group of glycine through its pyridoxal phosphate cofactor; CO(2) is released and the remaining methylamine moiety is then transferred to the lipoamide cofactor of the H protein. The chain is Probable glycine dehydrogenase (decarboxylating) subunit 1 from Francisella tularensis subsp. mediasiatica (strain FSC147).